The primary structure comprises 1091 residues: Leucine--tRNA ligase, cytoplasmic (1091 aa).

Positions Pro-53–His-63 match the 'HIGH' region motif. The short motif at Lys-715–Ser-719 is the 'KMSKS' region element. Residue Lys-718 coordinates ATP.

This sequence belongs to the class-I aminoacyl-tRNA synthetase family.

It is found in the cytoplasm. The protein localises to the cytosol. It catalyses the reaction tRNA(Leu) + L-leucine + ATP = L-leucyl-tRNA(Leu) + AMP + diphosphate. Catalyzes the specific attachment of an amino acid to its cognate tRNA in a two step reaction: the amino acid (AA) is first activated by ATP to form AA-AMP and then transferred to the acceptor end of the tRNA. The protein is Leucine--tRNA ligase, cytoplasmic of Arabidopsis thaliana (Mouse-ear cress).